A 27-amino-acid chain; its full sequence is Flagellar filament 31.5 kDa core protein (27 aa).

Belongs to the bacterial flagellin family. In terms of assembly, the flagellum consists of an outer layer composed of repeating units of FlaA around a core that contains one or all of five antigenically related polypeptides.

The protein localises to the periplasmic flagellum. It is found in the periplasm. In terms of biological role, component of the core of the flagella. In Spirochaeta aurantia, this protein is Flagellar filament 31.5 kDa core protein.